We begin with the raw amino-acid sequence, 861 residues long: ToMV resistance protein Tm-2(2) (861 aa).

The stretch at valine 63–aspartate 83 forms a coiled coil. Residues aspartate 162–aspartate 388 form the NB-ARC domain. Glycine 185–threonine 192 is a binding site for ATP. LRR repeat units lie at residues leucine 225 to serine 248, leucine 305 to phenylalanine 327, aspartate 388 to tyrosine 411, leucine 449 to glycine 472, valine 510 to lysine 536, methionine 585 to leucine 608, threonine 609 to serine 631, isoleucine 652 to proline 680, leucine 689 to proline 710, leucine 712 to tyrosine 735, proline 736 to proline 758, leucine 784 to phenylalanine 810, and proline 811 to methionine 835.

It belongs to the disease resistance NB-LRR family. In terms of assembly, (Microbial infection) Interacts with tobamoviruses mouvement protein (e.g. tobacco mosaic virus (TMV) MP, AC P03583) at the plasma membrane; this interaction triggers defense responses leading to programmed cell death. As to quaternary structure, binds to HSP90 proteins (e.g. HSP90-1 and Nicotiana benthamiana HSP90-1); this interaction seems required for defense responses toward tobamoviruses.

It localises to the cell membrane. Its function is as follows. Inhibitor of viral mouvements which confers resistance to some tobamoviruses including tomato mosaic virus (ToMV) (e.g. strains L, B7 and ToMV1-2) and tobacco mosaic virus (TMV), but not to resistance-breaking isolates (e.g. LIIA and ToMV2(2)) ToMV and tomato brown rugose fruit virus (ToBRFV). Elicits a hypersensitive reaction in response to avirulent (Avr) movement proteins from resistance inducing tobamoviruses (e.g. ToMV and TMV) strains, thus leading to programmed cell death; this local extreme resistance requires rbcS. This chain is ToMV resistance protein Tm-2(2), found in Solanum lycopersicum (Tomato).